The sequence spans 254 residues: 3-oxo-5-alpha-steroid 4-dehydrogenase 2 (254 aa).

4 helical membrane passes run 8–28 (SPVL…LYFA), 72–92 (PRSL…AHYF), 146–166 (FSLG…SDYI), and 206–226 (LATW…FLGL).

Belongs to the steroid 5-alpha reductase family.

Its subcellular location is the microsome membrane. It localises to the endoplasmic reticulum membrane. It carries out the reaction a 3-oxo-5alpha-steroid + NADP(+) = a 3-oxo-Delta(4)-steroid + NADPH + H(+). The enzyme catalyses 17beta-hydroxy-5alpha-androstan-3-one + NADP(+) = testosterone + NADPH + H(+). It catalyses the reaction 5alpha-pregnane-3,20-dione + NADP(+) = progesterone + NADPH + H(+). Converts testosterone (T) into 5-alpha-dihydrotestosterone (DHT) and progesterone or corticosterone into their corresponding 5-alpha-3-oxosteroids. It plays a central role in sexual differentiation and androgen physiology. The polypeptide is 3-oxo-5-alpha-steroid 4-dehydrogenase 2 (SRD5A2) (Sus scrofa (Pig)).